The sequence spans 402 residues: 26S proteasome non-ATPase regulatory subunit 4 homolog (402 aa).

Positions alanine 5–isoleucine 189 constitute a VWFA domain. Positions asparagine 221–arginine 240 constitute a UIM 1 domain. Positions glutamine 241–alanine 261 are enriched in basic and acidic residues. Disordered stretches follow at residues glutamine 241–aspartate 292 and methionine 302–alanine 321. UIM domains are found at residues aspartate 291–glycine 310 and valine 323–serine 342. Positions serine 363–lysine 402 are disordered. The segment covering glycine 385–lysine 402 has biased composition (basic and acidic residues).

It belongs to the proteasome subunit S5A family. As to quaternary structure, component of the 19S regulatory particle (RP/PA700) base subcomplex of the 26S proteasome. The 26S proteasome is composed of a core protease (CP), known as the 20S proteasome, capped at one or both ends by the 19S regulatory particle (RP/PA700). The RP/PA700 complex is composed of at least 17 different subunits in two subcomplexes, the base and the lid, which form the portions proximal and distal to the 20S proteolytic core, respectively. Interacts with PI4KG4.

Plays a role in maintaining the structural integrity of the 19S regulatory particle (RP), subcomplex of the 26S proteasome. Plays a major role in both the direct and indirect recognition of ubiquitinated substrates of ubiquitin/26S proteasome-mediated proteolysis (UPP). Binds and presumably selects ubiquitin-conjugates for destruction. This chain is 26S proteasome non-ATPase regulatory subunit 4 homolog, found in Oryza sativa subsp. japonica (Rice).